A 284-amino-acid chain; its full sequence is UPF0761 membrane protein IL2447 (284 aa).

The next 6 helical transmembrane spans lie at Met-41 to Phe-61, Met-98 to Asp-118, Phe-137 to Ala-157, Phe-178 to Leu-198, Val-214 to Phe-234, and Ile-247 to Leu-267.

The protein belongs to the UPF0761 family.

It localises to the cell inner membrane. The polypeptide is UPF0761 membrane protein IL2447 (Idiomarina loihiensis (strain ATCC BAA-735 / DSM 15497 / L2-TR)).